Consider the following 700-residue polypeptide: Putative ankyrin repeat protein FPV018 (700 aa).

ANK repeat units follow at residues aspartate 29–methionine 59, asparagine 63–glycine 92, arginine 126–methionine 155, methionine 204–threonine 233, alanine 236–serine 265, asparagine 270–isoleucine 299, aspartate 301–cysteine 332, cysteine 395–valine 424, tyrosine 428–glutamate 457, tyrosine 461–glutamine 490, and aspartate 494–phenylalanine 523.

This chain is Putative ankyrin repeat protein FPV018, found in Fowlpox virus (strain NVSL) (FPV).